The primary structure comprises 265 residues: Chalcone synthase (265 aa).

C40 is an active-site residue.

The protein belongs to the thiolase-like superfamily. Chalcone/stilbene synthases family.

It catalyses the reaction (E)-4-coumaroyl-CoA + 3 malonyl-CoA + 3 H(+) = 2',4,4',6'-tetrahydroxychalcone + 3 CO2 + 4 CoA. The protein operates within secondary metabolite biosynthesis; flavonoid biosynthesis. In terms of biological role, the primary product of this enzyme is 4,2',4',6'-tetrahydroxychalcone (also termed naringenin-chalcone or chalcone) which can under specific conditions spontaneously isomerize into naringenin. The polypeptide is Chalcone synthase (CHSII) (Medicago sativa (Alfalfa)).